We begin with the raw amino-acid sequence, 75 residues long: Small ribosomal subunit protein bS18 (75 aa).

This sequence belongs to the bacterial ribosomal protein bS18 family. In terms of assembly, part of the 30S ribosomal subunit. Forms a tight heterodimer with protein bS6.

Functionally, binds as a heterodimer with protein bS6 to the central domain of the 16S rRNA, where it helps stabilize the platform of the 30S subunit. The protein is Small ribosomal subunit protein bS18 of Hydrogenovibrio crunogenus (strain DSM 25203 / XCL-2) (Thiomicrospira crunogena).